The following is a 168-amino-acid chain: S-ribosylhomocysteine lyase (168 aa).

3 residues coordinate Fe cation: histidine 54, histidine 58, and cysteine 128.

It belongs to the LuxS family. Homodimer. Requires Fe cation as cofactor.

It catalyses the reaction S-(5-deoxy-D-ribos-5-yl)-L-homocysteine = (S)-4,5-dihydroxypentane-2,3-dione + L-homocysteine. Its function is as follows. Involved in the synthesis of autoinducer 2 (AI-2) which is secreted by bacteria and is used to communicate both the cell density and the metabolic potential of the environment. The regulation of gene expression in response to changes in cell density is called quorum sensing. Catalyzes the transformation of S-ribosylhomocysteine (RHC) to homocysteine (HC) and 4,5-dihydroxy-2,3-pentadione (DPD). The protein is S-ribosylhomocysteine lyase of Neisseria gonorrhoeae (strain ATCC 700825 / FA 1090).